Reading from the N-terminus, the 309-residue chain is Homoserine kinase (309 aa).

91–101 (PIGSGLGSSAC) is a binding site for ATP.

The protein belongs to the GHMP kinase family. Homoserine kinase subfamily.

The protein resides in the cytoplasm. It carries out the reaction L-homoserine + ATP = O-phospho-L-homoserine + ADP + H(+). Its pathway is amino-acid biosynthesis; L-threonine biosynthesis; L-threonine from L-aspartate: step 4/5. Functionally, catalyzes the ATP-dependent phosphorylation of L-homoserine to L-homoserine phosphate. This Salmonella agona (strain SL483) protein is Homoserine kinase.